The primary structure comprises 134 residues: Glycine cleavage system H protein (134 aa).

The Lipoyl-binding domain maps to threonine 24–glutamine 106. Lysine 65 bears the N6-lipoyllysine mark.

The protein belongs to the GcvH family. The glycine cleavage system is composed of four proteins: P, T, L and H. It depends on (R)-lipoate as a cofactor.

In terms of biological role, the glycine cleavage system catalyzes the degradation of glycine. The H protein shuttles the methylamine group of glycine from the P protein to the T protein. This Mycobacterium tuberculosis (strain ATCC 25177 / H37Ra) protein is Glycine cleavage system H protein.